Here is a 186-residue protein sequence, read N- to C-terminus: uncharacterized protein (186 aa).

This is an uncharacterized protein from Acanthamoeba polyphaga mimivirus (APMV).